A 180-amino-acid chain; its full sequence is Putative 5'(3')-deoxyribonucleotidase (180 aa).

The active-site Nucleophile is the D9. Mg(2+) contacts are provided by D9, D11, and D135. The active-site Proton donor is D11.

Belongs to the 5'(3')-deoxyribonucleotidase family. Requires Mg(2+) as cofactor.

Dephosphorylates the 5' and 2'(3')-phosphates of deoxyribonucleotides. This is Putative 5'(3')-deoxyribonucleotidase from Staphylococcus aureus (strain Mu50 / ATCC 700699).